A 177-amino-acid chain; its full sequence is Bifunctional protein PyrR (177 aa).

Positions 99 to 111 (VVLVDDVIYKGRT) match the PRPP-binding motif.

This sequence belongs to the purine/pyrimidine phosphoribosyltransferase family. PyrR subfamily.

It carries out the reaction UMP + diphosphate = 5-phospho-alpha-D-ribose 1-diphosphate + uracil. Its function is as follows. Regulates the transcription of the pyrimidine nucleotide (pyr) operon in response to exogenous pyrimidines. Also displays a weak uracil phosphoribosyltransferase activity which is not physiologically significant. The chain is Bifunctional protein PyrR from Gloeothece citriformis (strain PCC 7424) (Cyanothece sp. (strain PCC 7424)).